The chain runs to 308 residues: Cyclin-D4-1 (308 aa).

This sequence belongs to the cyclin family. Cyclin D subfamily. Interacts with CDKA-1, CDKB2-1, KRP4/ICK7, KRP5/ICK3, KRP6/ICK4 and KRP7/ICK5. As to expression, expressed in shoot apical meristem, leaf primordia vascular tissues and tapetum of anthers.

Its function is as follows. May activate cell cycle in the root apical meristem (RAM) and promote embryonic root (radicle) protrusion. The chain is Cyclin-D4-1 (CYCD4-1) from Arabidopsis thaliana (Mouse-ear cress).